We begin with the raw amino-acid sequence, 65 residues long: Probable movement protein p8 (65 aa).

The span at 1 to 10 (MENTENVRSG) shows a compositional bias: polar residues. The interval 1 to 47 (MENTENVRSGRNQREYSKERQQEGGYKEVSKAAVRKEGDVKQDMGPS) is disordered. The segment covering 12–42 (NQREYSKERQQEGGYKEVSKAAVRKEGDVKQ) has biased composition (basic and acidic residues).

This sequence belongs to the carmovirus/necrovirus/panicovirus movement protein p8 family.

Cell-to-cell movement. The protein is Probable movement protein p8 of Tobacco necrosis virus (strain D) (TNV-D).